The following is a 210-amino-acid chain: ATP-dependent Clp protease proteolytic subunit (210 aa).

The Nucleophile role is filled by Ser106. His131 is an active-site residue.

The protein belongs to the peptidase S14 family. In terms of assembly, fourteen ClpP subunits assemble into 2 heptameric rings which stack back to back to give a disk-like structure with a central cavity, resembling the structure of eukaryotic proteasomes.

The protein localises to the cytoplasm. The enzyme catalyses Hydrolysis of proteins to small peptides in the presence of ATP and magnesium. alpha-casein is the usual test substrate. In the absence of ATP, only oligopeptides shorter than five residues are hydrolyzed (such as succinyl-Leu-Tyr-|-NHMec, and Leu-Tyr-Leu-|-Tyr-Trp, in which cleavage of the -Tyr-|-Leu- and -Tyr-|-Trp bonds also occurs).. In terms of biological role, cleaves peptides in various proteins in a process that requires ATP hydrolysis. Has a chymotrypsin-like activity. Plays a major role in the degradation of misfolded proteins. In Bradyrhizobium sp. (strain BTAi1 / ATCC BAA-1182), this protein is ATP-dependent Clp protease proteolytic subunit.